Consider the following 446-residue polypeptide: N-succinylarginine dihydrolase (446 aa).

Substrate contacts are provided by residues 19-28 (SGLSYGNVAS), N110, and 137-138 (HR). E174 is a catalytic residue. A substrate-binding site is contributed by R214. Residue H250 is part of the active site. 2 residues coordinate substrate: D252 and N363. The Nucleophile role is filled by C369.

This sequence belongs to the succinylarginine dihydrolase family. Homodimer.

It carries out the reaction N(2)-succinyl-L-arginine + 2 H2O + 2 H(+) = N(2)-succinyl-L-ornithine + 2 NH4(+) + CO2. Its pathway is amino-acid degradation; L-arginine degradation via AST pathway; L-glutamate and succinate from L-arginine: step 2/5. Catalyzes the hydrolysis of N(2)-succinylarginine into N(2)-succinylornithine, ammonia and CO(2). The polypeptide is N-succinylarginine dihydrolase (Hahella chejuensis (strain KCTC 2396)).